We begin with the raw amino-acid sequence, 308 residues long: Porphobilinogen deaminase (308 aa).

C241 is modified (S-(dipyrrolylmethanemethyl)cysteine).

The protein belongs to the HMBS family. In terms of assembly, monomer. Requires dipyrromethane as cofactor.

The enzyme catalyses 4 porphobilinogen + H2O = hydroxymethylbilane + 4 NH4(+). The protein operates within porphyrin-containing compound metabolism; protoporphyrin-IX biosynthesis; coproporphyrinogen-III from 5-aminolevulinate: step 2/4. Tetrapolymerization of the monopyrrole PBG into the hydroxymethylbilane pre-uroporphyrinogen in several discrete steps. In Staphylococcus carnosus (strain TM300), this protein is Porphobilinogen deaminase.